A 363-amino-acid polypeptide reads, in one-letter code: Chorismate synthase (363 aa).

NADP(+) is bound by residues Arg48 and Arg54. FMN-binding positions include 125 to 127 (RSS), 237 to 238 (NA), Gly277, 292 to 296 (KPTSS), and Arg318.

This sequence belongs to the chorismate synthase family. In terms of assembly, homotetramer. FMNH2 is required as a cofactor.

The enzyme catalyses 5-O-(1-carboxyvinyl)-3-phosphoshikimate = chorismate + phosphate. The protein operates within metabolic intermediate biosynthesis; chorismate biosynthesis; chorismate from D-erythrose 4-phosphate and phosphoenolpyruvate: step 7/7. Functionally, catalyzes the anti-1,4-elimination of the C-3 phosphate and the C-6 proR hydrogen from 5-enolpyruvylshikimate-3-phosphate (EPSP) to yield chorismate, which is the branch point compound that serves as the starting substrate for the three terminal pathways of aromatic amino acid biosynthesis. This reaction introduces a second double bond into the aromatic ring system. The chain is Chorismate synthase from Stutzerimonas stutzeri (strain A1501) (Pseudomonas stutzeri).